Reading from the N-terminus, the 159-residue chain is Ribosomal RNA large subunit methyltransferase H (159 aa).

S-adenosyl-L-methionine contacts are provided by Leu76 and Gly108.

This sequence belongs to the RNA methyltransferase RlmH family. As to quaternary structure, homodimer.

It is found in the cytoplasm. It carries out the reaction pseudouridine(1915) in 23S rRNA + S-adenosyl-L-methionine = N(3)-methylpseudouridine(1915) in 23S rRNA + S-adenosyl-L-homocysteine + H(+). In terms of biological role, specifically methylates the pseudouridine at position 1915 (m3Psi1915) in 23S rRNA. In Finegoldia magna (strain ATCC 29328 / DSM 20472 / WAL 2508) (Peptostreptococcus magnus), this protein is Ribosomal RNA large subunit methyltransferase H.